The sequence spans 550 residues: CTP synthase (550 aa).

The segment at 1-266 (MNVNYIFVTG…DEYICKYFNL (266 aa)) is amidoligase domain. Ser14 is a binding site for CTP. Residue Ser14 coordinates UTP. Residues 15–20 (SLGKGI) and Asp72 contribute to the ATP site. Positions 72 and 140 each coordinate Mg(2+). CTP-binding positions include 147–149 (DIE), 187–192 (KTKPTQ), and Lys223. Residues 187–192 (KTKPTQ) and Lys223 contribute to the UTP site. Positions 291-546 (TIGIVGKYIR…INAAIQYQCK (256 aa)) constitute a Glutamine amidotransferase type-1 domain. Gly353 contributes to the L-glutamine binding site. Cys380 functions as the Nucleophile; for glutamine hydrolysis in the catalytic mechanism. Residues 381–384 (LGMQ), Glu404, and Arg474 each bind L-glutamine. Active-site residues include His519 and Glu521.

Belongs to the CTP synthase family. Homotetramer.

The catalysed reaction is UTP + L-glutamine + ATP + H2O = CTP + L-glutamate + ADP + phosphate + 2 H(+). It catalyses the reaction L-glutamine + H2O = L-glutamate + NH4(+). It carries out the reaction UTP + NH4(+) + ATP = CTP + ADP + phosphate + 2 H(+). The protein operates within pyrimidine metabolism; CTP biosynthesis via de novo pathway; CTP from UDP: step 2/2. Allosterically activated by GTP, when glutamine is the substrate; GTP has no effect on the reaction when ammonia is the substrate. The allosteric effector GTP functions by stabilizing the protein conformation that binds the tetrahedral intermediate(s) formed during glutamine hydrolysis. Inhibited by the product CTP, via allosteric rather than competitive inhibition. Functionally, catalyzes the ATP-dependent amination of UTP to CTP with either L-glutamine or ammonia as the source of nitrogen. Regulates intracellular CTP levels through interactions with the four ribonucleotide triphosphates. The polypeptide is CTP synthase (Blochmanniella floridana).